The chain runs to 542 residues: Chaperonin GroEL (542 aa).

Residues 29–32 (TLGP), 86–90 (DGTTT), Gly-413, 476–478 (NAA), and Asp-492 each bind ATP.

Belongs to the chaperonin (HSP60) family. In terms of assembly, forms a cylinder of 14 subunits composed of two heptameric rings stacked back-to-back. Interacts with the co-chaperonin GroES.

It localises to the cytoplasm. The enzyme catalyses ATP + H2O + a folded polypeptide = ADP + phosphate + an unfolded polypeptide.. In terms of biological role, together with its co-chaperonin GroES, plays an essential role in assisting protein folding. The GroEL-GroES system forms a nano-cage that allows encapsulation of the non-native substrate proteins and provides a physical environment optimized to promote and accelerate protein folding. The chain is Chaperonin GroEL from Streptococcus mutans serotype c (strain ATCC 700610 / UA159).